The primary structure comprises 218 residues: Small ribosomal subunit protein uS3c (218 aa).

One can recognise a KH type-2 domain in the interval I47–A118.

This sequence belongs to the universal ribosomal protein uS3 family. In terms of assembly, part of the 30S ribosomal subunit.

It is found in the plastid. The protein localises to the chloroplast. The chain is Small ribosomal subunit protein uS3c (rps3) from Cycas taitungensis (Prince sago).